The primary structure comprises 228 residues: 2-C-methyl-D-erythritol 4-phosphate cytidylyltransferase (228 aa).

The protein belongs to the IspD/TarI cytidylyltransferase family. IspD subfamily.

The catalysed reaction is 2-C-methyl-D-erythritol 4-phosphate + CTP + H(+) = 4-CDP-2-C-methyl-D-erythritol + diphosphate. It functions in the pathway isoprenoid biosynthesis; isopentenyl diphosphate biosynthesis via DXP pathway; isopentenyl diphosphate from 1-deoxy-D-xylulose 5-phosphate: step 2/6. In terms of biological role, catalyzes the formation of 4-diphosphocytidyl-2-C-methyl-D-erythritol from CTP and 2-C-methyl-D-erythritol 4-phosphate (MEP). The chain is 2-C-methyl-D-erythritol 4-phosphate cytidylyltransferase from Actinobacillus pleuropneumoniae serotype 3 (strain JL03).